The following is a 536-amino-acid chain: Uridine 5'-monophosphate transferase (536 aa).

A disordered region spans residues 22–84 (ADHPTHTPED…GLQQCSSSPS (63 aa)). Over residues 31–45 (DSPQTVPSPRSSSAH) the composition is skewed to polar residues. Positions 48-60 (EIQELRSLQETRP) are enriched in basic and acidic residues. Residues 66–84 (RSQSRSSKHGLQQCSSSPS) show a composition bias toward polar residues. LRR repeat units lie at residues 140–164 (AGQA…LHRL), 165–189 (AHLR…SLCK), 191–211 (LERI…IGAL), 212–234 (KNLS…IGQC), 236–257 (SLTT…LANL), and 258–282 (TQLK…NLDD). The 157-residue stretch at 377-533 (ITLDRIFKLN…LEGIATVMNQ (157 aa)) folds into the Fido domain.

It in the C-terminal section; belongs to the fic family. Interacts with several members of the Arabidopsis RLCK VIIa subfamily.

It is found in the secreted. The protein localises to the host cell. The protein resides in the host cell membrane. It catalyses the reaction L-seryl-[protein] + UTP = O-(5'-uridylyl)-L-seryl-[protein] + diphosphate. The catalysed reaction is L-threonyl-[protein] + UTP = uridylyl-L-threonyl-[protein] + diphosphate. Functions both as a virulence and an avirulence gene in Arabidopsis. Causes disease on the Kashmir (Kas) ecotype, but not on Columbia (Col-0) ecotype. Acts by directly uridylylating the conserved phosphorylation sites in the activation loop of a number of host receptor-like cytoplasmic protein kinases (RLCK), including BIK1, RIPK, PBL1 and PBL2, preventing the activation of these kinases and subsequent signal transduction. In susceptible Arabidopsis plants, uridylylation of BIK1 inhibits the PAMP-triggered immunity (PTI) signaling cascade and thereby promotes bacterial virulence. It also inhibits RPM1-dependent effector-triggered immunity (ETI) in mesophyll tissues by targeting RIPK. In contrast, in the resistant ecotype Col-0, xopAC is a major avirulence gene. Uridylylation of PBL2 triggers the PBL2-RKS1 interaction and thus the assembly of the PBL2-RKS1-ZAR1 complex, which, in turn, activates effector-triggered immunity (ETI) against X.campestris. This chain is Uridine 5'-monophosphate transferase, found in Xanthomonas campestris pv. campestris (strain 8004).